The primary structure comprises 230 residues: Ion-translocating oxidoreductase complex subunit E (230 aa).

The next 5 membrane-spanning stretches (helical) occupy residues 39 to 59 (LGLGIATLLVLVGSNVTVSLI), 69 to 89 (IPVFVMIIASLVTCVQLLMNA), 93 to 113 (GLYLSLGIFIPLIVTNCIIIG), 125 to 145 (LPAALDGFWMGMGMTTVLVVL), and 182 to 202 (SFLLALLPPGAFIGVGLLIAL).

It belongs to the NqrDE/RnfAE family. As to quaternary structure, the complex is composed of six subunits: RnfA, RnfB, RnfC, RnfD, RnfE and RnfG.

Its subcellular location is the cell inner membrane. Functionally, part of a membrane-bound complex that couples electron transfer with translocation of ions across the membrane. This Vibrio vulnificus (strain YJ016) protein is Ion-translocating oxidoreductase complex subunit E.